We begin with the raw amino-acid sequence, 258 residues long: Exu regulon transcriptional regulator (258 aa).

The region spanning 7 to 75 is the HTH gntR-type domain; that stretch reads RRLYQQLAAD…KGSGIHVVSN (69 aa). Residues 35 to 54 constitute a DNA-binding region (H-T-H motif); that stretch reads ERFIADEKNVSRTVVREAII.

Repressor for the exu regulon that encode genes involved in hexuronate utilization. It regulates the ExuT, UxaCA and UxuRAB operons. Binds D-tagaturonate and D-fructuronate as inducers. This is Exu regulon transcriptional regulator (exuR) from Escherichia coli O157:H7.